We begin with the raw amino-acid sequence, 546 residues long: ATP-dependent RNA helicase DBP2 (546 aa).

Residues 1-56 are disordered; that stretch reads MTYGGRDQQYNKTNYKSRGGDFRGGRNSDRNSYNDRPQGGNYRGGFGGRSNYNQPQ. Arg-18 and Arg-43 each carry omega-N-methylarginine. The span at 18-33 shows a compositional bias: basic and acidic residues; that stretch reads RGGDFRGGRNSDRNSY. Ser-88 and Ser-90 each carry phosphoserine. Residues 113-141 carry the Q motif motif; sequence TTFDEAGFPDYVLNEVKAEGFDKPTGIQC. The 176-residue stretch at 144–319 folds into the Helicase ATP-binding domain; sequence WPMALSGRDM…ADYLNDPIQV (176 aa). An ATP-binding site is contributed by 157 to 164; the sequence is AATGSGKT. The short motif at 267 to 270 is the DEAD box element; it reads DEAD. The Helicase C-terminal domain maps to 347–494; sequence RLNKYLETAS…NIPPELLKYD (148 aa). Lys-474 is covalently cross-linked (Glycyl lysine isopeptide (Lys-Gly) (interchain with G-Cter in ubiquitin)). Residues 493–546 form a disordered region; sequence YDRRSYGGGHPRYGGGRGGRGGYGRRGGYGGGRGGYGGNRQRDGGWGNRGRSNY. Over residues 498–540 the composition is skewed to gly residues; sequence YGGGHPRYGGGRGGRGGYGRRGGYGGGRGGYGGNRQRDGGWGN. Residues 505 to 530 form an RNA-binding RGG-box region; it reads YGGGRGGRGGYGRRGGYGGGRGGYGG. Dimethylated arginine; alternate is present on residues Arg-509, Arg-512, Arg-518, and Arg-525. Omega-N-methylarginine; alternate occurs at positions 509, 512, 518, and 525.

This sequence belongs to the DEAD box helicase family. DDX5/DBP2 subfamily. Interacts with UPF1. Associates with polysomes.

It is found in the cytoplasm. The protein localises to the nucleus. The catalysed reaction is ATP + H2O = ADP + phosphate + H(+). ATP-dependent RNA helicase involved nonsense-mediated mRNA decay and ribosome biogenesis through rRNA processing. Associates directly with chromatin, correlating with transcriptional activity. Required for assembly of mRNA-binding proteins YRA1, NAB2, and MEX67 onto poly(A)+ RNA. The chain is ATP-dependent RNA helicase DBP2 from Saccharomyces cerevisiae (strain ATCC 204508 / S288c) (Baker's yeast).